Here is a 314-residue protein sequence, read N- to C-terminus: Polyamine aminopropyltransferase (314 aa).

A PABS domain is found at 4–241; sequence GMYFFEHVTP…LNFGFLLASD (238 aa). Gln-33 contributes to the S-methyl-5'-thioadenosine binding site. Spermidine contacts are provided by His-64 and Glu-88. Residues Asp-108 and 140 to 141 each bind S-methyl-5'-thioadenosine; that span reads DA. Residue Asp-158 is the Proton acceptor of the active site. Pro-168 is a binding site for S-methyl-5'-thioadenosine.

The protein belongs to the spermidine/spermine synthase family. In terms of assembly, homodimer or homotetramer.

It is found in the cytoplasm. The enzyme catalyses S-adenosyl 3-(methylsulfanyl)propylamine + putrescine = S-methyl-5'-thioadenosine + spermidine + H(+). The protein operates within amine and polyamine biosynthesis; spermidine biosynthesis; spermidine from putrescine: step 1/1. Catalyzes the irreversible transfer of a propylamine group from the amino donor S-adenosylmethioninamine (decarboxy-AdoMet) to putrescine (1,4-diaminobutane) to yield spermidine. The sequence is that of Polyamine aminopropyltransferase from Thermus thermophilus (strain ATCC BAA-163 / DSM 7039 / HB27).